A 554-amino-acid polypeptide reads, in one-letter code: DDB1- and CUL4-associated factor 11 homolog (554 aa).

The disordered stretch occupies residues 24-52 (QRMKNRNDSDTDFSDDDEETSGGCPKMTP). The segment covering 33–43 (DTDFSDDDEET) has biased composition (acidic residues). 5 WD repeats span residues 245 to 284 (QNQCAVFCVRFSDDSEQIVCGTSEYSIHVFDVEQRRRIRT), 288 to 328 (AHED…DGDV), 336 to 375 (GHRDGVTYVDSRQDERYLLSNSKDQTIKVWDLRKFSCQGG), 414 to 458 (GHSV…VSRR), and 461 to 500 (GHQAVVRECDWHPQENEIVSTSWDGVTTVWTWDERAEGVI). The interval 527 to 554 (PQRKLRKPISARNAKCPTTSSEPDDFQI) is disordered.

This sequence belongs to the WD repeat LEC14B family.

Functionally, involved in regulation of lifespan. Required for dopaminergic CEP neuron degeneration in response to Mn(2+). The polypeptide is DDB1- and CUL4-associated factor 11 homolog (wdr-23) (Caenorhabditis briggsae).